The following is a 133-amino-acid chain: MSSEQQKLRWGIAWIYSSSNNTIITITDLTGAETVARVSGGQVVRADKDKPSPWAAMQAAYKAAQLALARGINAVHIKVRGPGGYGMKVPGPGASAAIRALARSGLVIGRIEDVTPIPHDIIRPPSGRKGRRV.

This sequence belongs to the universal ribosomal protein uS11 family. As to quaternary structure, part of the 30S ribosomal subunit.

Its function is as follows. Located on the platform of the 30S subunit. The protein is Small ribosomal subunit protein uS11 of Pyrobaculum aerophilum (strain ATCC 51768 / DSM 7523 / JCM 9630 / CIP 104966 / NBRC 100827 / IM2).